The following is a 252-amino-acid chain: 5'-nucleotidase SurE (252 aa).

Residues Asp-8, Asp-9, Ser-42, and Asn-94 each contribute to the a divalent metal cation site.

The protein belongs to the SurE nucleotidase family. The cofactor is a divalent metal cation.

The protein localises to the cytoplasm. It catalyses the reaction a ribonucleoside 5'-phosphate + H2O = a ribonucleoside + phosphate. In terms of biological role, nucleotidase that shows phosphatase activity on nucleoside 5'-monophosphates. This chain is 5'-nucleotidase SurE, found in Ehrlichia ruminantium (strain Welgevonden).